The chain runs to 130 residues: Small ribosomal subunit protein uS8 (130 aa).

Belongs to the universal ribosomal protein uS8 family. Part of the 30S ribosomal subunit.

Functionally, one of the primary rRNA binding proteins, it binds directly to 16S rRNA central domain where it helps coordinate assembly of the platform of the 30S subunit. The chain is Small ribosomal subunit protein uS8 from Haloarcula marismortui (strain ATCC 43049 / DSM 3752 / JCM 8966 / VKM B-1809) (Halobacterium marismortui).